Consider the following 309-residue polypeptide: Thermolabile glutaminase (309 aa).

Ser-64, Asn-114, Glu-160, Asn-167, Tyr-191, Tyr-243, and Val-261 together coordinate substrate.

It belongs to the glutaminase family. As to quaternary structure, homotetramer.

It carries out the reaction L-glutamine + H2O = L-glutamate + NH4(+). This Rhizobium etli (strain ATCC 51251 / DSM 11541 / JCM 21823 / NBRC 15573 / CFN 42) protein is Thermolabile glutaminase (glsA).